The primary structure comprises 270 residues: Insulin-like growth factor-binding protein-like 1 (270 aa).

The first 17 residues, 1–17, serve as a signal peptide directing secretion; the sequence is MPRLPLLLLLLPSLARG. Residues 26–101 enclose the IGFBP N-terminal domain; the sequence is RHPECSPCQQ…PEGTGLCVCA (76 aa). 7 cysteine pairs are disulfide-bonded: Cys-30–Cys-55, Cys-33–Cys-57, Cys-38–Cys-58, Cys-44–Cys-61, Cys-69–Cys-83, Cys-77–Cys-98, and Cys-107–Cys-143. The Kazal-like domain maps to 87-145; the sequence is ASGTAPEGTGLCVCAQRGAVCGSDGRSYSSICALRLRARHAPRAHHGHLHKARDGPCEF. The Ig-like C2-type domain occupies 147 to 251; sequence PVVLMPPRDI…GEAQSHGTVT (105 aa). Asn-158 carries an N-linked (GlcNAc...) asparagine glycan. A disulfide bridge links Cys-168 with Cys-235.

The protein resides in the secreted. Functionally, IGF-binding proteins prolong the half-life of IGFs and have been shown to either inhibit or stimulate the growth promoting effects of the IGFs in cell culture. They alter the interaction of IGFs with their cell surface receptors. The chain is Insulin-like growth factor-binding protein-like 1 (Igfbpl1) from Mus musculus (Mouse).